Here is a 529-residue protein sequence, read N- to C-terminus: Peptide chain release factor 3 (529 aa).

In terms of domain architecture, tr-type G spans 11–280; sequence AKRRTFAIIS…GLVEWAPAPM (270 aa). Residues 20-27, 88-92, and 142-145 contribute to the GTP site; these read SHPDAGKT, DTPGH, and NKLD.

Belongs to the TRAFAC class translation factor GTPase superfamily. Classic translation factor GTPase family. PrfC subfamily.

It is found in the cytoplasm. Functionally, increases the formation of ribosomal termination complexes and stimulates activities of RF-1 and RF-2. It binds guanine nucleotides and has strong preference for UGA stop codons. It may interact directly with the ribosome. The stimulation of RF-1 and RF-2 is significantly reduced by GTP and GDP, but not by GMP. The polypeptide is Peptide chain release factor 3 (Yersinia pseudotuberculosis serotype O:1b (strain IP 31758)).